A 58-amino-acid chain; its full sequence is Large ribosomal subunit protein uL30 (58 aa).

This sequence belongs to the universal ribosomal protein uL30 family. As to quaternary structure, part of the 50S ribosomal subunit.

The sequence is that of Large ribosomal subunit protein uL30 from Zymomonas mobilis subsp. mobilis (strain ATCC 31821 / ZM4 / CP4).